We begin with the raw amino-acid sequence, 658 residues long: UvrABC system protein B (658 aa).

Residues 26-414 (AGLKKGLKHQ…PDVIEQIIRP (389 aa)) form the Helicase ATP-binding domain. ATP is bound at residue 39 to 46 (GATGTGKT). The short motif at 92-115 (YYDYYQPEAYVPQSDTYIEKDASI) is the Beta-hairpin element. The Helicase C-terminal domain maps to 430-592 (QIDDLMDEIN…ITPKTIKKEI (163 aa)). The UVR domain occupies 622-658 (DVFIEGMEHEMKEAAKALDFERAAELRDALLEIKAEG).

The protein belongs to the UvrB family. As to quaternary structure, forms a heterotetramer with UvrA during the search for lesions. Interacts with UvrC in an incision complex.

The protein localises to the cytoplasm. In terms of biological role, the UvrABC repair system catalyzes the recognition and processing of DNA lesions. A damage recognition complex composed of 2 UvrA and 2 UvrB subunits scans DNA for abnormalities. Upon binding of the UvrA(2)B(2) complex to a putative damaged site, the DNA wraps around one UvrB monomer. DNA wrap is dependent on ATP binding by UvrB and probably causes local melting of the DNA helix, facilitating insertion of UvrB beta-hairpin between the DNA strands. Then UvrB probes one DNA strand for the presence of a lesion. If a lesion is found the UvrA subunits dissociate and the UvrB-DNA preincision complex is formed. This complex is subsequently bound by UvrC and the second UvrB is released. If no lesion is found, the DNA wraps around the other UvrB subunit that will check the other stand for damage. This Listeria monocytogenes serotype 4b (strain F2365) protein is UvrABC system protein B.